Here is an 816-residue protein sequence, read N- to C-terminus: Fibroblast growth factor receptor 1 (816 aa).

The N-terminal stretch at 1–23 (MLSWRHLVFWAMLVMATLSAARP) is a signal peptide. Residues 24–374 (APTLPEQVSP…VIMTSPLYLE (351 aa)) are Extracellular-facing. The region spanning 25–118 (PTLPEQVSPK…ETTFFAVNVS (94 aa)) is the Ig-like C2-type 1 domain. Cys-54 and Cys-100 form a disulfide bridge. N-linked (GlcNAc...) asparagine glycans are attached at residues Asn-76 and Asn-116. Positions 118 to 152 (SDRIPSVEDDDDDDEKSSSEEKEAENSKPNPVAPF) are disordered. The segment covering 133–143 (KSSSEEKEAEN) has biased composition (basic and acidic residues). Ig-like C2-type domains are found at residues 156 to 244 (PEKM…YQLD) and 253 to 355 (PILQ…AWLT). The cysteines at positions 176 and 228 are disulfide-linked. 5 N-linked (GlcNAc...) asparagine glycosylation sites follow: Asn-238, Asn-262, Asn-294, Asn-315, and Asn-328. Cys-275 and Cys-339 are disulfide-bonded. A helical transmembrane segment spans residues 375–395 (IIIYCTGAFLISCMLVTVIIY). Residues 396–816 (KMKNTTKKTD…QHANGGLKKR (421 aa)) lie on the Cytoplasmic side of the membrane. The residue at position 459 (Tyr-459) is a Phosphotyrosine; by autocatalysis. Residues 474–763 (LILGKPLGEG…VAMTSNQEYL (290 aa)) form the Protein kinase domain. Residues 480–486 (LGEGCFG), Lys-510, 558–560 (EYA), and Asn-564 each bind ATP. 2 positions are modified to phosphotyrosine; by autocatalysis: Tyr-579 and Tyr-581. The active-site Proton acceptor is the Asp-619. The ATP site is built by Arg-623 and Asp-637. Phosphotyrosine; by autocatalysis occurs at positions 649, 650, 726, and 762. The disordered stretch occupies residues 776–816 (FPDTRSSTCSSGEDSVFSHDPLPDEPCLPKYQHANGGLKKR). Residues 779–788 (TRSSTCSSGE) are compositionally biased toward polar residues.

Belongs to the protein kinase superfamily. Tyr protein kinase family. Fibroblast growth factor receptor subfamily. Monomer. Homodimer after ligand binding. Autophosphorylated. Binding of FGF family members together with heparan sulfate proteoglycan or heparin promotes receptor dimerization and autophosphorylation on tyrosine residues. Autophosphorylation occurs in trans between the two FGFR molecules present in the dimer and proceeds in a highly ordered manner. Phosphotyrosine residues provide docking sites for interacting proteins and so are crucial for FGFR1 function and its regulation. In terms of processing, ubiquitinated. FGFR1 is rapidly ubiquitinated after autophosphorylation, leading to internalization and degradation. Post-translationally, N-glycosylated in the endoplasmic reticulum. The N-glycan chains undergo further maturation to an Endo H-resistant form in the Golgi apparatus.

The protein localises to the cell membrane. It is found in the nucleus. The protein resides in the cytoplasm. It localises to the cytosol. Its subcellular location is the cytoplasmic vesicle. The catalysed reaction is L-tyrosyl-[protein] + ATP = O-phospho-L-tyrosyl-[protein] + ADP + H(+). With respect to regulation, present in an inactive conformation in the absence of bound ligand. Ligand binding leads to dimerization and activation by sequential autophosphorylation on tyrosine residues. Its function is as follows. Tyrosine-protein kinase that acts as a cell-surface receptor for fibroblast growth factors and plays an essential role in the regulation of embryonic development, cell proliferation, differentiation and migration. Required for normal mesoderm patterning and normal skeletogenesis. Phosphorylates PLCG1, FRS2, GAB1 and SHB. Ligand binding leads to the activation of several signaling cascades. Activation of PLCG1 leads to the production of the cellular signaling molecules diacylglycerol and inositol-1,4,5-trisphosphate. Phosphorylation of FRS2 triggers recruitment of GRB2, GAB1, PIK3R1 and SOS1, and mediates activation of RAS, MAPK1/ERK2, MAPK3/ERK1 and the MAP kinase signaling pathway, as well as of the AKT1 signaling pathway. Promotes phosphorylation of SHC1, STAT1 and PTPN11/SHP2. In the nucleus, enhances RPS6KA1 and CREB1 activity and contributes to the regulation of transcription. FGFR1 signaling is down-regulated by ubiquitination, internalization and degradation. The chain is Fibroblast growth factor receptor 1 (FGFR1) from Pleurodeles waltl (Iberian ribbed newt).